Reading from the N-terminus, the 427-residue chain is Mitogen-activated protein kinase 8B (427 aa).

The Protein kinase domain occupies 26–321; it reads YQNLRPIGSG…VDEALQHPYI (296 aa). ATP contacts are provided by residues 33–40 and K55; that span reads GSGAQGIV. The active-site Proton acceptor is D151. Position 183 is a phosphothreonine (T183). The TXY motif lies at 183 to 185; the sequence is TPY. Y185 bears the Phosphotyrosine mark. The interval 372–427 is disordered; that stretch reads IRGQPSPIGAAVINGSPQPSSSSSINDVSSMSTEPTVASDTDSSLEASAGPLSCCR. Low complexity predominate over residues 387–403; that stretch reads SPQPSSSSSINDVSSMS. Over residues 404-417 the composition is skewed to polar residues; that stretch reads TEPTVASDTDSSLE.

It belongs to the protein kinase superfamily. CMGC Ser/Thr protein kinase family. MAP kinase subfamily. Mg(2+) is required as a cofactor. Dually phosphorylated on Thr-183 and Tyr-185, which activates the enzyme. Expressed at high levels in the ovary and at lower levels in brain, gill, heart, spleen, liver, kidney, muscle, bladder and gut.

The enzyme catalyses L-seryl-[protein] + ATP = O-phospho-L-seryl-[protein] + ADP + H(+). It catalyses the reaction L-threonyl-[protein] + ATP = O-phospho-L-threonyl-[protein] + ADP + H(+). Its activity is regulated as follows. Activated by threonine and tyrosine phosphorylation. Functionally, responds to activation by environmental stress and pro-inflammatory cytokines by phosphorylating a number of transcription factors, primarily components of AP-1 such as c-Jun and ATF2 and thus regulates AP-1 transcriptional activity. May play a role in the regulation of the circadian clock. In Cyprinus carpio (Common carp), this protein is Mitogen-activated protein kinase 8B (mapk8b).